The primary structure comprises 499 residues: MNKFDEFIESNEKDLDVDTSTRNSIISMSPVRKTGRKIRSASSNGYRLEHHRTSSAGSMHSQRLMTPTRLNDQDHPLQAKPDARRVVTRHSSVSVPNAMSKRRSLIQPMVVPTTPESQNNLPSVSHSEGSYGIPLESTTVLSSEQAMASGLRRSRNGSSQSVNSMIATTIPTNGVDVSALLQSLATKELELLECKQKIEDLKKQTQHEEQNYTRRARELHELKEQVSKHLDPSLNTPVKNRAFSPVYQNIPLESRTENAGNSSLPSSVSKPKNMGHQSTNQSRSVSPQDIQERRQRDDSSDSSKQSLWSKPLALFNQFDKIIQHEIERTLNWDDSLSGTPEVQEGTPTSNSESSAQQYDNEAPGARQKSPSQGSVSRSLWSFVSDVKAGLLGIEEENDNDVITDNRCDPVYKSDRQHEQKKSTHKITNRGQAEDSGDDSSLNMRKFKTTTKFQKDNAGNNSLTDESGHRTREKKSKRSSNKLSFIGEPDNDNSSVQKLS.

Positions R32 to Q62 are disordered. Residues A179–D231 adopt a coiled-coil conformation. T236 is subject to Phosphothreonine. Phosphoserine occurs at positions 244 and 286. 3 disordered regions span residues L252–S306, W332–R377, and D400–S499. A compositionally biased stretch (polar residues) spans E257–P287. Positions I290 to D301 are enriched in basic and acidic residues. 2 stretches are compositionally biased toward polar residues: residues W332–D359 and K368–R377. Positions T403–K421 are enriched in basic and acidic residues. Residues T470 to S479 are compositionally biased toward basic residues.

It belongs to the TDA11 family.

It localises to the cytoplasm. The sequence is that of Topoisomerase I damage affected protein 11 (TDA11) from Saccharomyces cerevisiae (strain Zymaflore VL3) (Baker's yeast).